The sequence spans 358 residues: Fructose-bisphosphate aldolase (358 aa).

Ser61 lines the D-glyceraldehyde 3-phosphate pocket. The active-site Proton donor is Asp108. Residues His109, Asp143, Glu173, and His225 each contribute to the Zn(2+) site. Dihydroxyacetone phosphate is bound at residue Gly226. His264 lines the Zn(2+) pocket. Dihydroxyacetone phosphate is bound by residues 265-267 (GGS) and 286-289 (NIDT). Thr289, Thr312, Thr340, and Thr342 each carry phosphothreonine.

The protein belongs to the class II fructose-bisphosphate aldolase family. In terms of assembly, homodimer. It depends on Zn(2+) as a cofactor.

It carries out the reaction beta-D-fructose 1,6-bisphosphate = D-glyceraldehyde 3-phosphate + dihydroxyacetone phosphate. It participates in carbohydrate degradation; glycolysis; D-glyceraldehyde 3-phosphate and glycerone phosphate from D-glucose: step 4/4. Its function is as follows. Catalyzes the aldol condensation of dihydroxyacetone phosphate (DHAP or glycerone-phosphate) with glyceraldehyde 3-phosphate (G3P) to form fructose 1,6-bisphosphate (FBP) in gluconeogenesis and the reverse reaction in glycolysis. This Schizosaccharomyces pombe (strain 972 / ATCC 24843) (Fission yeast) protein is Fructose-bisphosphate aldolase (fba1).